We begin with the raw amino-acid sequence, 525 residues long: CBL-interacting protein kinase 21 (525 aa).

One can recognise a Protein kinase domain in the interval 87–342; that stretch reads YEMGRALGEG…ITGIRAHEWF (256 aa). ATP is bound by residues 93-101 and lysine 116; that span reads LGEGHFGKV. Aspartate 210 functions as the Proton acceptor in the catalytic mechanism. Residues 228–257 are activation loop; that stretch reads DFGLSALPQNQRKDGLLHTTCGSPNYIAPE. Residues 372–401 enclose the NAF domain; it reads DIETSPAISQINAFQLIGMSSCLDLSGFFE. The PPI stretch occupies residues 407-436; that stretch reads ERKIRFVSNYSPTSLFEKIESTVTEKGFQV.

The protein belongs to the protein kinase superfamily. CAMK Ser/Thr protein kinase family. SNF1 subfamily. Mn(2+) serves as cofactor.

The enzyme catalyses L-seryl-[protein] + ATP = O-phospho-L-seryl-[protein] + ADP + H(+). It carries out the reaction L-threonyl-[protein] + ATP = O-phospho-L-threonyl-[protein] + ADP + H(+). CIPK serine-threonine protein kinases interact with CBL proteins. Binding of a CBL protein to the regulatory NAF domain of CIPK protein lead to the activation of the kinase in a calcium-dependent manner. This is CBL-interacting protein kinase 21 (CIPK21) from Oryza sativa subsp. japonica (Rice).